A 116-amino-acid polypeptide reads, in one-letter code: Probable transcriptional regulator WhiB6 (116 aa).

4 residues coordinate [4Fe-4S] cluster: C12, C53, C56, and C62. The region spanning 33 to 86 is the 4Fe-4S Wbl-type domain; sequence VCTQDPDRWTTTPDDEAKTLCRACPRRWLCARDAVESAGAEGLWAGVVIPESGR.

The protein belongs to the WhiB family. The cofactor is [4Fe-4S] cluster. In terms of processing, the Fe-S cluster can be nitrosylated by nitric oxide (NO). Upon Fe-S cluster removal intramolecular disulfide bonds are formed.

It is found in the cytoplasm. Functionally, acts as a transcriptional regulator. Probably redox-responsive. The apo- but not holo-form probably binds DNA. The protein is Probable transcriptional regulator WhiB6 (whiB6) of Mycobacterium tuberculosis (strain CDC 1551 / Oshkosh).